Here is a 345-residue protein sequence, read N- to C-terminus: Phenylalanine--tRNA ligase alpha subunit (345 aa).

Position 266 (E266) interacts with Mg(2+).

Belongs to the class-II aminoacyl-tRNA synthetase family. Phe-tRNA synthetase alpha subunit type 1 subfamily. In terms of assembly, tetramer of two alpha and two beta subunits. Mg(2+) is required as a cofactor.

Its subcellular location is the cytoplasm. The catalysed reaction is tRNA(Phe) + L-phenylalanine + ATP = L-phenylalanyl-tRNA(Phe) + AMP + diphosphate + H(+). The protein is Phenylalanine--tRNA ligase alpha subunit of Burkholderia lata (strain ATCC 17760 / DSM 23089 / LMG 22485 / NCIMB 9086 / R18194 / 383).